Here is a 412-residue protein sequence, read N- to C-terminus: MSELLLPPEHRYAKIIKEKLNEDGSELSILNLGPTHPATHGIFQNILLMDGERIVDAEPTIGYIHRAFEKIAENRPFYQITPLTDRMNYCSSPINNMAWWMTLEKLLDIEVPKRAQYLRVIVMELARITDHIICNSILGVDTGAYTGFLYVFQFREKIYEIYEEICGARLTTNMGRIGGFERDWSPKAFQLLNTFLEEFPIAWKEFENLFERNRIFIDRTVNVGAISAEKAMAYGFTGPNLRAAGIDYDVRVAEPYSSYEDFEFIIPVGKSGDTYDRFCVRNAEVWESLSIIRQALAKMPEGNVYHAEVPDYYLPPKEDVYHNMESLIYHFKIVMGEVPVPVAEIYHAVEGGNGELGFYLTTDGSRTPYRLHFRRPCFIYYQAYPEMIKGALLSDAIVILSSLNVIAGELDA.

This sequence belongs to the complex I 49 kDa subunit family. As to quaternary structure, NDH-1 is composed of 14 different subunits. Subunits NuoB, C, D, E, F, and G constitute the peripheral sector of the complex.

The protein localises to the cell inner membrane. The catalysed reaction is a quinone + NADH + 5 H(+)(in) = a quinol + NAD(+) + 4 H(+)(out). NDH-1 shuttles electrons from NADH, via FMN and iron-sulfur (Fe-S) centers, to quinones in the respiratory chain. The immediate electron acceptor for the enzyme in this species is believed to be a menaquinone. Couples the redox reaction to proton translocation (for every two electrons transferred, four hydrogen ions are translocated across the cytoplasmic membrane), and thus conserves the redox energy in a proton gradient. The sequence is that of NADH-quinone oxidoreductase subunit D from Flavobacterium psychrophilum (strain ATCC 49511 / DSM 21280 / CIP 103535 / JIP02/86).